We begin with the raw amino-acid sequence, 207 residues long: Sodium/potassium-transporting ATPase subunit beta-1-interacting protein 1 (207 aa).

The next 3 helical transmembrane spans lie at 2 to 22, 35 to 55, and 62 to 82; these read GRCDGRCTLVVICCLQLVAAL, APILANFLHIMAVILGVFGTV, and LILYAVWLVVWVGWNSFIICF. The N-linked (GlcNAc...) asparagine glycan is linked to Asn100. The helical transmembrane segment at 147 to 167 threads the bilayer; the sequence is VVSSALQVFLALFGFVYACYV.

Belongs to the NKAIN family. As to quaternary structure, interacts with atp1b1 C-terminus.

The protein localises to the cell membrane. In Danio rerio (Zebrafish), this protein is Sodium/potassium-transporting ATPase subunit beta-1-interacting protein 1 (nkain1).